We begin with the raw amino-acid sequence, 317 residues long: 17-beta-hydroxysteroid dehydrogenase type 6 (317 aa).

The signal sequence occupies residues 1 to 17 (MWFYLVTLVGLYYLLRW). Residue 33 to 57 (FITGCDSGFGNLLARQLDRRGMRVL) participates in NAD(+) binding. A glycan (N-linked (GlcNAc...) asparagine) is linked at Asn-161. Ser-164 lines the substrate pocket. Catalysis depends on Tyr-176, which acts as the Proton acceptor.

The protein belongs to the short-chain dehydrogenases/reductases (SDR) family. In terms of tissue distribution, detected in prostate, liver and kidney.

The protein localises to the microsome membrane. It localises to the endoplasmic reticulum membrane. It carries out the reaction all-trans-retinol--[retinol-binding protein] + NAD(+) = all-trans-retinal--[retinol-binding protein] + NADH + H(+). The catalysed reaction is all-trans-retinol + NAD(+) = all-trans-retinal + NADH + H(+). It catalyses the reaction androsterone + NAD(+) = 5alpha-androstan-3,17-dione + NADH + H(+). The enzyme catalyses testosterone + NAD(+) = androst-4-ene-3,17-dione + NADH + H(+). It carries out the reaction 5alpha-androstane-3alpha,17beta-diol + NAD(+) = 17beta-hydroxy-5alpha-androstan-3-one + NADH + H(+). The catalysed reaction is 17beta-estradiol + NAD(+) = estrone + NADH + H(+). It catalyses the reaction 17beta-estradiol + NADP(+) = estrone + NADPH + H(+). The enzyme catalyses 3alpha-hydroxy-5alpha-pregnan-20-one + NAD(+) = 5alpha-pregnane-3,20-dione + NADH + H(+). It carries out the reaction 5alpha-androstane-3beta,17beta-diol + NAD(+) = 17beta-hydroxy-5alpha-androstan-3-one + NADH + H(+). The catalysed reaction is 3beta-hydroxy-5alpha-androstan-17-one + NAD(+) = 5alpha-androstan-3,17-dione + NADH + H(+). Its activity is regulated as follows. Competitively inhibited by 9-cis-retinoic acid and 13-cis-retinoic acid. Its function is as follows. NAD-dependent oxidoreductase with broad substrate specificity that shows both oxidative and reductive activity (in vitro). Has retinol dehydrogenase activity towards all-trans-retinol (in vitro). Has 17-beta-hydroxysteroid dehydrogenase activity towards various steroids (in vitro). Converts 5-alpha-androstan-3-alpha,17-beta-diol to androsterone and estradiol to estrone (in vitro). Has 3-alpha-hydroxysteroid dehydrogenase activity towards androsterone (in vitro). The sequence is that of 17-beta-hydroxysteroid dehydrogenase type 6 (Hsd17b6) from Rattus norvegicus (Rat).